Consider the following 361-residue polypeptide: Free fatty acid receptor 4 (361 aa).

Residues 1-45 are Extracellular-facing; it reads MSPECARAAGDAPLRSLEQANRTRFPFFSDVKGDHRLVLAAVETT. Asn21 is a glycosylation site (N-linked (GlcNAc...) asparagine). Residues 46-66 traverse the membrane as a helical segment; the sequence is VLVLIFAVSLLGNVCALVLVA. The Cytoplasmic segment spans residues 67 to 77; the sequence is RRRRRGATACL. The chain crosses the membrane as a helical span at residues 78-98; that stretch reads VLNLFCADLLFISAIPLVLAV. Residues 99–112 are Extracellular-facing; it reads RWTEAWLLGPVACH. A disulfide bond links Cys111 and Cys194. The helical transmembrane segment at 113–133 threads the bilayer; sequence LLFYVMTLSGSVTILTLAAVS. Over 134–156 the chain is Cytoplasmic; sequence LERMVCIVHLQRGVRGPGRRARA. Residues 157–177 form a helical membrane-spanning segment; it reads VLLALIWGYSAVAALPLCVFF. Over 178–204 the chain is Extracellular; it reads RVVPQRLPGADQEISICTLIWPTIPGE. Residues 205–225 form a helical membrane-spanning segment; that stretch reads ISWDVSFVTLNFLVPGLVIVI. The Cytoplasmic segment spans residues 226-268; sequence SYSKILQITKASRKRLTVSLAYSESHQIRVSQQDFRLFRTLFL. A helical membrane pass occupies residues 269 to 289; sequence LMVSFFIMWSPIIITILLILI. Residues 290–295 are Extracellular-facing; that stretch reads QNFKQD. A helical membrane pass occupies residues 296–316; sequence LVIWPSLFFWVVAFTFANSAL. The Cytoplasmic portion of the chain corresponds to 317–361; sequence NPILYNMTLCRNEWKKIFCCFWFPEKGAILTDTSVKRNDLSIISG. 2 positions are modified to phosphothreonine: Thr347 and Thr349. 3 positions are modified to phosphoserine: Ser350, Ser357, and Ser360.

It belongs to the G-protein coupled receptor 1 family. In terms of assembly, interacts (via C-terminus) with ARRB2 following LCFAs stimulation. Phosphorylated at two clusters of Ser and Thr residues located in the intracellular C-terminus, a prerequisite for FFAR4 internalization via an ARRB2-dependent pathway. As to expression, the predominant isoform in human tissues. Expressed in adipose tissue, pancreatic islets, lung and brain. Expressed in alpha cells of pancreatic islets. Expressed in primary cilia of perivascular preadipocytes of white adipose tissue (at protein level). In terms of tissue distribution, abundant expression in the intestinal tract. Expressed in colonic intraepithelial neuroendocrine cells.

It localises to the cell membrane. The protein localises to the endosome membrane. It is found in the lysosome membrane. Its subcellular location is the cell projection. The protein resides in the cilium membrane. G-protein-coupled receptor for long-chain fatty acids (LCFAs) with a major role in adipogenesis, energy metabolism and inflammation. Signals via G-protein and beta-arrestin pathways. LCFAs sensing initiates activation of phosphoinositidase C-linked G proteins GNAQ and GNA11 (G(q)/G(11)), inducing a variety of cellular responses via second messenger pathways such as intracellular calcium mobilization, modulation of cyclic adenosine monophosphate (cAMP) production, and mitogen-activated protein kinases (MAPKs). After LCFAs binding, associates with beta-arrestin ARRB2 that acts as an adapter protein coupling the receptor to specific downstream signaling pathways, as well as mediating receptor endocytosis. In response to dietary fats, plays an important role in the regulation of adipocyte proliferation and differentiation. Acts as a receptor for omega-3 polyunsaturated fatty acids (PUFAs) at primary cilium of perivascular preadipocytes, initiating an adipogenic program via cAMP and CTCF-dependent chromatin remodeling that ultimately results in transcriptional activation of adipogenic genes and cell cycle entry. Induces differentiation of brown adipocytes probably via autocrine and endocrine functions of FGF21 hormone. Activates brown adipocytes by initiating intracellular calcium signaling that leads to mitochondrial depolarization and fission, and overall increased mitochondrial respiration. Consequently stimulates fatty acid uptake and oxidation in mitochondria together with UCP1-mediated thermogenic respiration, eventually reducing fat mass. Regulates bi-potential differentiation of bone marrow mesenchymal stem cells toward osteoblasts or adipocytes likely by up-regulating distinct integrins. In response to dietary fats regulates hormone secretion and appetite. Stimulates GIP and GLP1 secretion from enteroendocrine cells as well as GCG secretion in pancreatic alpha cells, thereby playing a role in the regulation of blood glucose levels. Negatively regulates glucose-induced SST secretion in pancreatic delta cells. Mediates LCFAs inhibition of GHRL secretion, an appetite-controlling hormone. In taste buds, contributes to sensing of dietary fatty acids by the gustatory system. During the inflammatory response, promotes anti-inflammatory M2 macrophage differentiation in adipose tissue. Mediates the anti-inflammatory effects of omega-3 PUFAs via inhibition of NLRP3 inflammasome activation. In this pathway, interacts with adapter protein ARRB2 and inhibits the priming step triggered by Toll-like receptors (TLRs) at the level of TAK1 and TAB1. Further inhibits the activation step when ARRB2 directly associates with NLRP3, leading to inhibition of pro-inflammatory cytokine release. Mediates LCFAs anti-apoptotic effects. In terms of biological role, receptor for LCFAs decoupled from G-protein signaling. May signal through beta-arrestin pathway. After LCFAs binding, associates with beta-arrestin ARRB2 that may act as an adapter protein coupling the receptor to specific downstream signaling pathways, as well as mediating receptor endocytosis. This is Free fatty acid receptor 4 from Homo sapiens (Human).